The sequence spans 124 residues: Protein MT1307 (124 aa).

A signal peptide (tat-type signal) is located at residues 1 to 35 (MTTMITLRRRFAVAVAGVATAAATTVTLAPAPANA).

It to M.tuberculosis Rv1813c. Predicted to be exported by the Tat system. The position of the signal peptide cleavage has not been experimentally proven.

This Mycobacterium tuberculosis (strain CDC 1551 / Oshkosh) protein is Protein MT1307.